A 159-amino-acid chain; its full sequence is RxLR effector protein 24 (159 aa).

A signal peptide spans 1 to 18; it reads MRFLVWVFFVGLVTFVSG. The RxLR-dEER motif lies at 58–82; sequence RFLRSNANQDLTTANDDSDVKEEER. Residues 109–159 are RABA-binding domain; the sequence is EKAFQHMMKQGETPTSLAKRLEIGGAAELRYEKVYEKYTAWWINYHTVAGT.

It belongs to the RxLR effector family. As to quaternary structure, interacts with potato RABA GTPases including RABA1a, RABA2a and RABA4a.

It is found in the secreted. The protein resides in the host cell membrane. It localises to the host endomembrane system. Effector protein that contributes to pathogen virulence. Targets members of the RABA GTPases subfamily to inhibit vesicular secretion, leading to an accumulation of secretory proteins in the endoplasmic reticulum. The protein is RxLR effector protein 24 of Phytophthora infestans (strain T30-4) (Potato late blight agent).